The sequence spans 72 residues: Prokaryotic ubiquitin-like protein Pup (72 aa).

Residues 1-10 (MATKDTGGGQ) are compositionally biased toward gly residues. Residues 1–45 (MATKDTGGGQQKATRSTEEVEEQAQDAQASEDLKERQEKLSDDVD) form a disordered region. Positions 10–60 (QQKATRSTEEVEEQAQDAQASEDLKERQEKLSDDVDSVLDEIDDVLEENAE) form a coiled coil. The segment at 28-66 (QASEDLKERQEKLSDDVDSVLDEIDDVLEENAEDFVRSF) is ARC ATPase binding. Positions 31–42 (EDLKERQEKLSD) are enriched in basic and acidic residues. An Isoglutamyl lysine isopeptide (Glu-Lys) (interchain with K-? in acceptor proteins) cross-link involves residue glutamate 72.

Belongs to the prokaryotic ubiquitin-like protein family. Strongly interacts with the proteasome-associated ATPase ARC through a hydrophobic interface; the interacting region of Pup lies in its C-terminal half. There is one Pup binding site per ARC hexamer ring.

It functions in the pathway protein degradation; proteasomal Pup-dependent pathway. Protein modifier that is covalently attached to lysine residues of substrate proteins, thereby targeting them for proteasomal degradation. The tagging system is termed pupylation. The sequence is that of Prokaryotic ubiquitin-like protein Pup from Streptomyces coelicolor (strain ATCC BAA-471 / A3(2) / M145).